Here is a 216-residue protein sequence, read N- to C-terminus: Thiopurine S-methyltransferase (216 aa).

Positions 11, 46, 67, and 122 each coordinate S-adenosyl-L-methionine.

This sequence belongs to the class I-like SAM-binding methyltransferase superfamily. TPMT family.

It localises to the cytoplasm. It carries out the reaction S-adenosyl-L-methionine + a thiopurine = S-adenosyl-L-homocysteine + a thiopurine S-methylether.. The protein is Thiopurine S-methyltransferase of Vibrio parahaemolyticus serotype O3:K6 (strain RIMD 2210633).